Consider the following 516-residue polypeptide: Extracellular endo-inulinase inuB (516 aa).

A signal peptide spans 1-25 (MLNPKVAYMVWMTCLGLTLPSQAQS). Residues 40–43 (WMNE), Gln-59, Trp-67, and 99–100 (FT) each bind substrate. The active site involves Glu-43. The N-linked (GlcNAc...) asparagine glycan is linked to Asn-109. Residues 175–176 (RD) and Glu-233 each bind substrate. Asn-372, Asn-419, and Asn-424 each carry an N-linked (GlcNAc...) asparagine glycan.

Belongs to the glycosyl hydrolase 32 family.

The protein resides in the secreted. It catalyses the reaction Endohydrolysis of (2-&gt;1)-beta-D-fructosidic linkages in inulin.. Its function is as follows. Endo-inulinase involved in utilization of the plant storage polymer inulin, consisting of fructooligosaccharides with a degree of polymerization (DP) value from 2 to 60. The chain is Extracellular endo-inulinase inuB (inuB) from Aspergillus niger.